We begin with the raw amino-acid sequence, 235 residues long: Enolase-phosphatase E1 (235 aa).

The protein belongs to the HAD-like hydrolase superfamily. MasA/MtnC family. Monomer. Mg(2+) is required as a cofactor.

It catalyses the reaction 5-methylsulfanyl-2,3-dioxopentyl phosphate + H2O = 1,2-dihydroxy-5-(methylsulfanyl)pent-1-en-3-one + phosphate. The protein operates within amino-acid biosynthesis; L-methionine biosynthesis via salvage pathway; L-methionine from S-methyl-5-thio-alpha-D-ribose 1-phosphate: step 3/6. It functions in the pathway amino-acid biosynthesis; L-methionine biosynthesis via salvage pathway; L-methionine from S-methyl-5-thio-alpha-D-ribose 1-phosphate: step 4/6. Bifunctional enzyme that catalyzes the enolization of 2,3-diketo-5-methylthiopentyl-1-phosphate (DK-MTP-1-P) into the intermediate 2-hydroxy-3-keto-5-methylthiopentenyl-1-phosphate (HK-MTPenyl-1-P), which is then dephosphorylated to form the acireductone 1,2-dihydroxy-3-keto-5-methylthiopentene (DHK-MTPene). The chain is Enolase-phosphatase E1 from Parvibaculum lavamentivorans (strain DS-1 / DSM 13023 / NCIMB 13966).